Here is a 275-residue protein sequence, read N- to C-terminus: Membrane protein insertase YidC 2 (275 aa).

Positions 1–21 (MKKKNIILISVLLGALLLLTG) are cleaved as a signal peptide. Cys-22 is lipidated: N-palmitoyl cysteine. Residue Cys-22 is the site of S-diacylglycerol cysteine attachment. 4 helical membrane passes run 48–68 (FVAK…TLLI), 133–153 (QMGC…YYAI), 174–194 (MVLA…SMIG), and 212–232 (IMIL…WAVG).

This sequence belongs to the OXA1/ALB3/YidC family. Type 2 subfamily.

It localises to the cell membrane. Required for the insertion and/or proper folding and/or complex formation of integral membrane proteins into the membrane. Involved in integration of membrane proteins that insert both dependently and independently of the Sec translocase complex, as well as at least some lipoproteins. This is Membrane protein insertase YidC 2 from Listeria monocytogenes serotype 4b (strain F2365).